The primary structure comprises 136 residues: Translation initiation factor 5A (136 aa).

Lys-37 carries the post-translational modification Hypusine.

This sequence belongs to the eIF-5A family.

Its subcellular location is the cytoplasm. In terms of biological role, functions by promoting the formation of the first peptide bond. The sequence is that of Translation initiation factor 5A (eIF5A) from Thermococcus onnurineus (strain NA1).